The sequence spans 341 residues: tRNA N6-adenosine threonylcarbamoyltransferase (341 aa).

Fe cation contacts are provided by His114 and His118. Substrate contacts are provided by residues 136–140, Asp169, Gly182, Asp186, and Asn278; that span reads LVSGG. Asp304 is a binding site for Fe cation.

The protein belongs to the KAE1 / TsaD family. The cofactor is Fe(2+).

The protein localises to the cytoplasm. The enzyme catalyses L-threonylcarbamoyladenylate + adenosine(37) in tRNA = N(6)-L-threonylcarbamoyladenosine(37) in tRNA + AMP + H(+). Functionally, required for the formation of a threonylcarbamoyl group on adenosine at position 37 (t(6)A37) in tRNAs that read codons beginning with adenine. Is involved in the transfer of the threonylcarbamoyl moiety of threonylcarbamoyl-AMP (TC-AMP) to the N6 group of A37, together with TsaE and TsaB. TsaD likely plays a direct catalytic role in this reaction. The polypeptide is tRNA N6-adenosine threonylcarbamoyltransferase (Lactococcus lactis subsp. cremoris (strain SK11)).